A 727-amino-acid polypeptide reads, in one-letter code: MGRRAKMVEKVKSLMETHDQIRNMGICAHIDHGKTTLSDNLLAGAGMISKDLAGDQLALDFDEEEAARGITIYAANVSMVHEYNGKEYLINLIDTPGHVDFGGDVTRAMRAIDGAVVVCCAVEGVMPQTETVLRQALKEKVKPVLFINKVDRLINELKLTPEELQGRFMKIIAEVNKLIEKMAPEEFKKEWLCDVVTGKVAFGSAYNNWAISVPYMQKSGISFKDIIDYCEQEKQSELADKAPLHEVILDMAIKHLPNPLQAQKYRIPNIWKGDAESEVGKSMAMCDPNGPLAGVVTKIIVDKHAGSISACRLFSGRIKQGDELYLVGSKQKARAQQVAIFMGAERVQVPSISAGNICALTGLREATAGETVCSPSKILEPGFESLTHTSEPVITVAIEAKNTKDLPKLIEILRQIGREDNTVRIEINEETGEHLISGMGELHIEVITNTKIGRDGGIEVDVGEPIIVYRETITGTSPEIEGKSPNKHNKLYMIAEPMEESVYAAYVEGKIHDEDFKKKTNVDAETRLIEAGLEREQAKKVMSIYNGNMIVNMTKGIVQLDEARELIIEGFKEGVKGGPLASERAQGVKIKLIDATFHEDAIHRGPSQIIPAIRFGVRDAVSSAKPILLEPMQKIYINTPQDYMGDAIREINNRRGQIVDMEQEGDMAIIKGSVPVAEMFGFAGAIRGATQGRCLWSVEFSGFERVPNEIQTKVVAQIRDRKGLKSE.

The region spanning 19–260 (DQIRNMGICA…MAIKHLPNPL (242 aa)) is the tr-type G domain. Residues 28 to 35 (AHIDHGKT), 94 to 98 (DTPGH), and 148 to 151 (NKVD) each bind GTP. Residue histidine 603 is modified to Diphthamide.

This sequence belongs to the TRAFAC class translation factor GTPase superfamily. Classic translation factor GTPase family. EF-G/EF-2 subfamily.

Its subcellular location is the cytoplasm. In terms of biological role, catalyzes the GTP-dependent ribosomal translocation step during translation elongation. During this step, the ribosome changes from the pre-translocational (PRE) to the post-translocational (POST) state as the newly formed A-site-bound peptidyl-tRNA and P-site-bound deacylated tRNA move to the P and E sites, respectively. Catalyzes the coordinated movement of the two tRNA molecules, the mRNA and conformational changes in the ribosome. This Methanococcus vannielii (strain ATCC 35089 / DSM 1224 / JCM 13029 / OCM 148 / SB) protein is Elongation factor 2 (fusA).